The primary structure comprises 749 residues: Small G protein signaling modulator 3 (749 aa).

Positions 114 to 305 constitute a Rab-GAP TBC domain; the sequence is GIPHGMRPQL…RIWDLFFYEG (192 aa). Residue Ser406 is modified to Phosphoserine. The stretch at 415 to 439 forms a coiled coil; that stretch reads EDDLEALKAKNIKQTELVADLREAI. Residues 480-539 enclose the SH3 domain; it reads SHRRRAKALLDFERHDDDELGFRKNDIITIVSQKDEHCWVGELNGLRGWFPAKFVEVLDE. Residues 555 to 718 form the RUN domain; the sequence is GVTDLVRGTL…FAFSLSQDWE (164 aa).

The protein belongs to the small G protein signaling modulator family. In terms of assembly, interacts with GJA1. Interaction with GJA1 induces its degradation. Interacts via its RUN domain with the C-terminal region of NF2. Interacts with RAB3A, RAB4A, RAB5A, RAB8A, RAB11A, RAP1A, RAP1B, RAP2A, RAP2B and PDCD6IP. No interaction with RAB27A. Widely expressed.

It localises to the cytoplasm. May play a cooperative role in NF2-mediated growth suppression of cells. This Homo sapiens (Human) protein is Small G protein signaling modulator 3.